The following is a 154-amino-acid chain: Ribonuclease H (154 aa).

Positions 3 to 144 (ELPVVSIFTD…ADQLARDGVA (142 aa)) constitute an RNase H type-1 domain. 4 residues coordinate Mg(2+): Asp-12, Glu-50, Asp-72, and Asp-136.

Belongs to the RNase H family. As to quaternary structure, monomer. Mg(2+) serves as cofactor.

The protein localises to the cytoplasm. The enzyme catalyses Endonucleolytic cleavage to 5'-phosphomonoester.. Endonuclease that specifically degrades the RNA of RNA-DNA hybrids. This is Ribonuclease H from Bradyrhizobium sp. (strain ORS 278).